A 445-amino-acid chain; its full sequence is 23S rRNA (uracil(1939)-C(5))-methyltransferase RlmD (445 aa).

Positions 1–21 (MARRRKQLPETPEPASIETLS) are disordered. Residues 5–64 (RKQLPETPEPASIETLSHDGRGIARRDGKTTFIDNALPGEEVMFKFTYMRRKFDEGKAVE) enclose the TRAM domain. 4 residues coordinate [4Fe-4S] cluster: C77, C83, C86, and C165. The S-adenosyl-L-methionine site is built by Q275, F304, N309, E325, D352, and D373. The active-site Nucleophile is C399.

The protein belongs to the class I-like SAM-binding methyltransferase superfamily. RNA M5U methyltransferase family. RlmD subfamily.

It catalyses the reaction uridine(1939) in 23S rRNA + S-adenosyl-L-methionine = 5-methyluridine(1939) in 23S rRNA + S-adenosyl-L-homocysteine + H(+). Catalyzes the formation of 5-methyl-uridine at position 1939 (m5U1939) in 23S rRNA. This is 23S rRNA (uracil(1939)-C(5))-methyltransferase RlmD from Alcanivorax borkumensis (strain ATCC 700651 / DSM 11573 / NCIMB 13689 / SK2).